Here is a 359-residue protein sequence, read N- to C-terminus: Probable dual-specificity RNA methyltransferase RlmN (359 aa).

E91 serves as the catalytic Proton acceptor. The 239-residue stretch at 97 to 335 folds into the Radical SAM core domain; sequence QHYGHSVCVT…CVVRQEHGTD (239 aa). A disulfide bond links C104 and C340. C111, C115, and C118 together coordinate [4Fe-4S] cluster. Residues 163–164, S195, 218–220, and N296 contribute to the S-adenosyl-L-methionine site; these read GE and SLH. The S-methylcysteine intermediate role is filled by C340.

Belongs to the radical SAM superfamily. RlmN family. [4Fe-4S] cluster is required as a cofactor.

Its subcellular location is the cytoplasm. The catalysed reaction is adenosine(2503) in 23S rRNA + 2 reduced [2Fe-2S]-[ferredoxin] + 2 S-adenosyl-L-methionine = 2-methyladenosine(2503) in 23S rRNA + 5'-deoxyadenosine + L-methionine + 2 oxidized [2Fe-2S]-[ferredoxin] + S-adenosyl-L-homocysteine. The enzyme catalyses adenosine(37) in tRNA + 2 reduced [2Fe-2S]-[ferredoxin] + 2 S-adenosyl-L-methionine = 2-methyladenosine(37) in tRNA + 5'-deoxyadenosine + L-methionine + 2 oxidized [2Fe-2S]-[ferredoxin] + S-adenosyl-L-homocysteine. Specifically methylates position 2 of adenine 2503 in 23S rRNA and position 2 of adenine 37 in tRNAs. The sequence is that of Probable dual-specificity RNA methyltransferase RlmN from Streptococcus pyogenes serotype M12 (strain MGAS2096).